We begin with the raw amino-acid sequence, 424 residues long: Endoglucanase 1 (424 aa).

The N-terminal stretch at M1–A18 is a signal peptide. 9 cysteine pairs are disulfide-bonded: C35-C41, C68-C90, C80-C86, C156-C384, C188-C211, C192-C210, C231-C250, C239-C244, and C255-C331. N76 is a glycosylation site (N-linked (GlcNAc...) asparagine). E213 (nucleophile) is an active-site residue. Catalysis depends on E218, which acts as the Proton donor. Residues N271 and N385 are each glycosylated (N-linked (GlcNAc...) asparagine).

It belongs to the glycosyl hydrolase 7 (cellulase C) family. In terms of assembly, monomer.

It is found in the secreted. It catalyses the reaction Endohydrolysis of (1-&gt;4)-beta-D-glucosidic linkages in cellulose, lichenin and cereal beta-D-glucans.. In terms of biological role, endoglucanase that is involved in the biological conversion of cellulose to glucose. Hydrolyzes internal beta-1,4-glucosidic bonds. The protein is Endoglucanase 1 of Pyricularia oryzae (strain 70-15 / ATCC MYA-4617 / FGSC 8958) (Rice blast fungus).